Here is a 206-residue protein sequence, read N- to C-terminus: Ribosomal RNA small subunit methyltransferase G (206 aa).

Residues glycine 73, leucine 78, 124 to 125 (VE), and arginine 139 each bind S-adenosyl-L-methionine.

It belongs to the methyltransferase superfamily. RNA methyltransferase RsmG family.

Its subcellular location is the cytoplasm. The enzyme catalyses guanosine(527) in 16S rRNA + S-adenosyl-L-methionine = N(7)-methylguanosine(527) in 16S rRNA + S-adenosyl-L-homocysteine. Functionally, specifically methylates the N7 position of guanine in position 527 of 16S rRNA. The sequence is that of Ribosomal RNA small subunit methyltransferase G from Serratia proteamaculans (strain 568).